Here is a 674-residue protein sequence, read N- to C-terminus: Enzymatic polyprotein (674 aa).

Positions I40–F130 are protease. The active site involves D47. Residues L267–I447 enclose the Reverse transcriptase domain.

This sequence belongs to the caulimoviridae enzymatic polyprotein family.

The enzyme catalyses DNA(n) + a 2'-deoxyribonucleoside 5'-triphosphate = DNA(n+1) + diphosphate. Encodes for at least two polypeptides: protease (PR) and reverse transcriptase (RT). The protease processes the polyprotein in cis. Reverse transcriptase is multifunctional enzyme that converts the viral RNA genome into dsDNA in viral cytoplasmic capsids. This enzyme displays a DNA polymerase activity that can copy either DNA or RNA templates, and a ribonuclease H (RNase H) activity that cleaves the RNA strand of RNA-DNA heteroduplexes in a partially processive 3'- to 5'-endonucleasic mode. Neo-synthesized pregenomic RNA (pgRNA) are encapsidated, and reverse-transcribed inside the nucleocapsid. Partial (+)DNA is synthesized from the (-)DNA template and generates the relaxed circular DNA (RC-DNA) genome. After budding and infection, the RC-DNA migrates in the nucleus, and is converted into a plasmid-like covalently closed circular DNA (cccDNA). The polypeptide is Enzymatic polyprotein (Arabidopsis thaliana (Mouse-ear cress)).